Reading from the N-terminus, the 615-residue chain is UvrABC system protein C (615 aa).

Residues 12–91 (EKPGVYIMKD…IKKYKPKYNV (80 aa)) enclose the GIY-YIG domain. Residues 203–238 (DWLIQKLKEDMKKAAEELRFEEAARIRDQIFAIERT) enclose the UVR domain.

It belongs to the UvrC family. Interacts with UvrB in an incision complex.

Its subcellular location is the cytoplasm. The UvrABC repair system catalyzes the recognition and processing of DNA lesions. UvrC both incises the 5' and 3' sides of the lesion. The N-terminal half is responsible for the 3' incision and the C-terminal half is responsible for the 5' incision. The sequence is that of UvrABC system protein C from Thermoanaerobacter pseudethanolicus (strain ATCC 33223 / 39E) (Clostridium thermohydrosulfuricum).